Reading from the N-terminus, the 443-residue chain is Tol-Pal system protein TolB (443 aa).

The first 33 residues, 1 to 33 (MKIGIINTKIRTVFSAFACMIAASLVCTMPARA), serve as a signal peptide directing secretion.

Belongs to the TolB family. The Tol-Pal system is composed of five core proteins: the inner membrane proteins TolA, TolQ and TolR, the periplasmic protein TolB and the outer membrane protein Pal. They form a network linking the inner and outer membranes and the peptidoglycan layer.

The protein localises to the periplasm. Functionally, part of the Tol-Pal system, which plays a role in outer membrane invagination during cell division and is important for maintaining outer membrane integrity. This is Tol-Pal system protein TolB from Brucella suis biovar 1 (strain 1330).